The chain runs to 73 residues: U-scoloptoxin(03)-Ssd1b (73 aa).

The N-terminal stretch at 1–23 (MKSSMAVLLVMGLIIFTLDKCYS) is a signal peptide.

Contains 3 disulfide bonds. In terms of tissue distribution, expressed by the venom gland.

It is found in the secreted. In Scolopendra dehaani (Thai centipede), this protein is U-scoloptoxin(03)-Ssd1b.